A 558-amino-acid chain; its full sequence is MALKGQEDYIFHFKDSSHPVDFLDAFRTFYMDGLFTDITLQCPSGIIFHCHRAVLAACSNYFKAMFTADMKEKFKSKIKLSGIHHDILEGLVNYAYTSQIEITKRNVQSLLEAADLLQFLSVKKACEQFLVRHLDIDNCIGMHSFAEFHVCSELEKESRRILCSRFKEVWQQEEFLEISLEKFLFILSRKNLSVWKEEAILEPVIKWTAHDVENRIECIYNLLSYINIDIDPVYLKTALGLQRSCLLTENKIRSLIYNALNPMHKEISQRSTATMYIIGGYYWHPLSEVHIWDPLTNVWIQGAEIPDYTRESYGVTCLGPNIYVTGGYRTDNIDALDTVWIYNSEGDEWTEGLPMLNARYYHCAVTLGGCVYALGGYRKGAPAEEAEFYDPLKEKWLPIANMIKGVGNATACVLHEVIYVIGGHCGYRGSCTYDKVQSYNSDINEWSLITASPHPEYGLCSVPFENKLYLVGGQTTITECYDPEQNEWRETAPMMERRMECGAVIMNGCIYVTGGYSYSKGTYLQSIEKYDPDLNKWEIVGNLPSAMRSHGCVCVYNV.

In terms of domain architecture, BTB spans 36–104 (TDITLQCPSG…AYTSQIEITK (69 aa)). In terms of domain architecture, BACK spans 139-240 (CIGMHSFAEF…DPVYLKTALG (102 aa)). Kelch repeat units follow at residues 274-320 (TMYI…CLGP), 321-369 (NIYV…TLGG), 370-416 (CVYA…VLHE), 418-466 (IYVI…PFEN), 467-508 (KLYL…IMNG), and 510-557 (IYVT…CVYN).

This Mus musculus (Mouse) protein is Kelch-like protein 23 (Klhl23).